The primary structure comprises 874 residues: Alanine--tRNA ligase (874 aa).

Positions 562, 566, 664, and 668 each coordinate Zn(2+).

This sequence belongs to the class-II aminoacyl-tRNA synthetase family. Requires Zn(2+) as cofactor.

It is found in the cytoplasm. It catalyses the reaction tRNA(Ala) + L-alanine + ATP = L-alanyl-tRNA(Ala) + AMP + diphosphate. Its function is as follows. Catalyzes the attachment of alanine to tRNA(Ala) in a two-step reaction: alanine is first activated by ATP to form Ala-AMP and then transferred to the acceptor end of tRNA(Ala). Also edits incorrectly charged Ser-tRNA(Ala) and Gly-tRNA(Ala) via its editing domain. This is Alanine--tRNA ligase from Neisseria meningitidis serogroup A / serotype 4A (strain DSM 15465 / Z2491).